Consider the following 146-residue polypeptide: Mite group 2 allergen Der p 2 (146 aa).

A signal peptide spans 1–17; sequence MMYKILCLSLLVAAVAR. 3 cysteine pairs are disulfide-bonded: C25–C136, C38–C44, and C90–C95.

The protein belongs to the NPC2 family.

The protein localises to the secreted. The protein is Mite group 2 allergen Der p 2 (DERP2) of Dermatophagoides pteronyssinus (European house dust mite).